Consider the following 220-residue polypeptide: Large ribosomal subunit protein uL3 (220 aa).

The interval 127–155 is disordered; that stretch reads FQGAIKRHGQSRGPMSHSSHFHRAPDSVG.

The protein belongs to the universal ribosomal protein uL3 family. Part of the 50S ribosomal subunit. Forms a cluster with proteins L14 and L19.

Its function is as follows. One of the primary rRNA binding proteins, it binds directly near the 3'-end of the 23S rRNA, where it nucleates assembly of the 50S subunit. In Staphylococcus aureus (strain JH9), this protein is Large ribosomal subunit protein uL3.